The sequence spans 103 residues: Co-chaperonin GroES (103 aa).

It belongs to the GroES chaperonin family. As to quaternary structure, heptamer of 7 subunits arranged in a ring. Interacts with the chaperonin GroEL.

The protein resides in the cytoplasm. Together with the chaperonin GroEL, plays an essential role in assisting protein folding. The GroEL-GroES system forms a nano-cage that allows encapsulation of the non-native substrate proteins and provides a physical environment optimized to promote and accelerate protein folding. GroES binds to the apical surface of the GroEL ring, thereby capping the opening of the GroEL channel. This is Co-chaperonin GroES from Synechococcus sp. (strain CC9311).